The chain runs to 203 residues: Proline-rich protein 1 (203 aa).

Residues 1 to 20 form the signal peptide; the sequence is MMKLGLYLTLLFLSVWTVSG.

Component of the acid-insoluble and acid-soluble organic matrix of calcified layers of the shell (at protein level).

It is found in the secreted. The sequence is that of Proline-rich protein 1 from Lottia gigantea (Giant owl limpet).